Consider the following 552-residue polypeptide: Thermosome subunit beta (552 aa).

Residues 531 to 552 are disordered; sequence AGKKGGSEPGGKKEKEEKSSED. Over residues 540–552 the composition is skewed to basic and acidic residues; it reads GGKKEKEEKSSED.

The protein belongs to the TCP-1 chaperonin family. In terms of assembly, forms a heterooligomeric complex of two stacked nine-membered rings; one of alpha and the other of beta subunits. Sometimes called a 'rosettasome'.

It localises to the cytoplasm. The catalysed reaction is ATP + H2O = ADP + phosphate + H(+). Functionally, molecular chaperone; binds unfolded polypeptides in vitro, stimulates protein folding and has ATPase activity. One of the most abundant proteins in the cell at all temperatures. This chain is Thermosome subunit beta (thsB), found in Saccharolobus shibatae (strain ATCC 51178 / DSM 5389 / JCM 8931 / NBRC 15437 / B12) (Sulfolobus shibatae).